We begin with the raw amino-acid sequence, 139 residues long: Protein archease (139 aa).

Ca(2+) contacts are provided by D12, D138, and I139.

This sequence belongs to the archease family.

Its function is as follows. Activates the tRNA-splicing ligase complex by facilitating the enzymatic turnover of catalytic subunit RtcB. Acts by promoting the guanylylation of RtcB, a key intermediate step in tRNA ligation. Can also alter the NTP specificity of RtcB such that ATP, dGTP or ITP is used efficiently. In Sulfurisphaera tokodaii (strain DSM 16993 / JCM 10545 / NBRC 100140 / 7) (Sulfolobus tokodaii), this protein is Protein archease.